The following is a 204-amino-acid chain: Methylthioribulose-1-phosphate dehydratase (204 aa).

The Zn(2+) site is built by histidine 94 and histidine 96.

This sequence belongs to the aldolase class II family. MtnB subfamily. Zn(2+) serves as cofactor.

It catalyses the reaction 5-(methylsulfanyl)-D-ribulose 1-phosphate = 5-methylsulfanyl-2,3-dioxopentyl phosphate + H2O. It participates in amino-acid biosynthesis; L-methionine biosynthesis via salvage pathway; L-methionine from S-methyl-5-thio-alpha-D-ribose 1-phosphate: step 2/6. Functionally, catalyzes the dehydration of methylthioribulose-1-phosphate (MTRu-1-P) into 2,3-diketo-5-methylthiopentyl-1-phosphate (DK-MTP-1-P). This Citrobacter koseri (strain ATCC BAA-895 / CDC 4225-83 / SGSC4696) protein is Methylthioribulose-1-phosphate dehydratase.